A 587-amino-acid polypeptide reads, in one-letter code: Pyruvate decarboxylase 3 (587 aa).

Residues D48 and H135 each contribute to the substrate site. Positions 415-496 are thiamine pyrophosphate binding; it reads DSWFNCQKLR…FLINNGGYTI (82 aa). 3 residues coordinate Mg(2+): D464, N491, and G493. E497 is a substrate binding site.

Belongs to the TPP enzyme family. As to quaternary structure, homotetramer. A metal cation serves as cofactor. Thiamine diphosphate is required as a cofactor.

It catalyses the reaction a 2-oxocarboxylate + H(+) = an aldehyde + CO2. The protein is Pyruvate decarboxylase 3 (PDC3) of Oryza sativa subsp. indica (Rice).